The primary structure comprises 1235 residues: Chitin synthase 4 (1235 aa).

Residues 1 to 11 show a composition bias toward pro residues; sequence MSLPRRPGPSP. The tract at residues 1-203 is disordered; it reads MSLPRRPGPS…ASKGKREKSG (203 aa). Residues 1–212 lie on the Cytoplasmic side of the membrane; the sequence is MSLPRRPGPS…GGLPTPSFWN (212 aa). Residues 19–28 show a composition bias toward basic residues; sequence YRQSGSRRSR. Over residues 46 to 59 the composition is skewed to polar residues; the sequence is PSQQQRVPSISSFP. A compositionally biased stretch (basic and acidic residues) spans 94-107; the sequence is IRPERNRIGKDHPN. Positions 116–125 are enriched in polar residues; it reads NMNTLPSSTG. Over residues 169 to 187 the composition is skewed to basic and acidic residues; that stretch reads ETEKSGDERRRRRKSDTTK. The span at 188–199 shows a compositional bias: basic residues; the sequence is HGKIVKASKGKR. The chain crosses the membrane as a helical span at residues 213–233; the sequence is IYCGFVTFWCPGFVLKCFGMP. Residues 234–244 are Extracellular-facing; the sequence is EMAQQRAWREK. The chain crosses the membrane as a helical span at residues 245–265; that stretch reads MGLISIILLIMGFVGFITFGF. Over 266–514 the chain is Cytoplasmic; sequence TQVVCGKPPL…ASKVVLYVSL (249 aa). The helical transmembrane segment at 515–535 threads the bilayer; the sequence is VLILAVVLARFVLALIFQWFI. The Extracellular segment spans residues 536–1065; it reads SKTYAAAKTS…SMQFIVGIEL (530 aa). The tract at residues 545–592 is disordered; it reads SQTSDQRKRNRQIEDWTEDIYRAPPRLPGEVGSSVAGSSDRQSKRSSA. The segment covering 549 to 558 has biased composition (basic and acidic residues); that stretch reads DQRKRNRQIE. Asparagine 639 is a glycosylation site (N-linked (GlcNAc...) asparagine). The tract at residues 645 to 670 is disordered; sequence FLKSDAYGSSSSPADGPGPAGFIHEA. Residues 648-665 are compositionally biased toward low complexity; it reads SDAYGSSSSPADGPGPAG. N-linked (GlcNAc...) asparagine glycosylation is present at asparagine 1034. The helical transmembrane segment at 1066-1086 threads the bilayer; sequence IGTLVLPAAIAFTFYVVIISI. Over 1087-1092 the chain is Cytoplasmic; that stretch reads INSPPQ. A helical transmembrane segment spans residues 1093 to 1113; it reads IIPLVLLGLILGLPAILVVVT. Residues 1114-1116 are Extracellular-facing; sequence AHS. The helical transmembrane segment at 1117–1137 threads the bilayer; sequence WSYIIWMFIYLLSLPVWNFVL. Residues 1138–1235 are Cytoplasmic-facing; the sequence is PTYAFWKFDD…RHFDDYFSDA (98 aa). Residues 1201 to 1235 are disordered; sequence RDNVISGVGGSNGWGSSQPRGHEQGRHFDDYFSDA. A compositionally biased stretch (basic and acidic residues) spans 1220–1235; that stretch reads RGHEQGRHFDDYFSDA.

Belongs to the chitin synthase family. Class IV subfamily.

Its subcellular location is the cell membrane. It carries out the reaction [(1-&gt;4)-N-acetyl-beta-D-glucosaminyl](n) + UDP-N-acetyl-alpha-D-glucosamine = [(1-&gt;4)-N-acetyl-beta-D-glucosaminyl](n+1) + UDP + H(+). Its function is as follows. Polymerizes chitin, a structural polymer of the cell wall and septum, by transferring the sugar moiety of UDP-GlcNAc to the non-reducing end of the growing chitin polymer. The protein is Chitin synthase 4 (chs-4) of Neurospora crassa (strain ATCC 24698 / 74-OR23-1A / CBS 708.71 / DSM 1257 / FGSC 987).